Here is a 241-residue protein sequence, read N- to C-terminus: Small ribosomal subunit protein uS10m (241 aa).

A mitochondrion-targeting transit peptide spans 1-54 (MIAGVLRRSSLPSRQTLSAALASFNSCISHNLTPATTGASVSSRFTLASSPNSF).

It belongs to the universal ribosomal protein uS10 family. As to quaternary structure, component of the mitochondrial ribosome small subunit.

Its subcellular location is the mitochondrion. The polypeptide is Small ribosomal subunit protein uS10m (RPS10) (Arabidopsis thaliana (Mouse-ear cress)).